Here is a 192-residue protein sequence, read N- to C-terminus: Density-regulated protein homolog (192 aa).

Residues 62-116 (GLEISDEPAADGDEKKKQKRGGKGSKTGAAAAQAAASGGKKKGGGPQKVTLQREP) form a disordered region. Low complexity predominate over residues 87–99 (KTGAAAAQAAASG). The SUI1 domain occupies 117–176 (RGKKSVTVIKGLATFDIDLKVASKLFAQKFACGSSVTGADEIVIQGDVKDDLLDLIPEKW).

It belongs to the DENR family.

The polypeptide is Density-regulated protein homolog (Caenorhabditis elegans).